The chain runs to 462 residues: Argininosuccinate lyase (462 aa).

Belongs to the lyase 1 family. Argininosuccinate lyase subfamily.

The protein localises to the cytoplasm. It carries out the reaction 2-(N(omega)-L-arginino)succinate = fumarate + L-arginine. It functions in the pathway amino-acid biosynthesis; L-arginine biosynthesis; L-arginine from L-ornithine and carbamoyl phosphate: step 3/3. The protein is Argininosuccinate lyase of Gloeothece citriformis (strain PCC 7424) (Cyanothece sp. (strain PCC 7424)).